The chain runs to 235 residues: Probable transcriptional regulatory protein CJJ81176_1187 (235 aa).

The protein belongs to the TACO1 family.

It localises to the cytoplasm. The protein is Probable transcriptional regulatory protein CJJ81176_1187 of Campylobacter jejuni subsp. jejuni serotype O:23/36 (strain 81-176).